A 150-amino-acid polypeptide reads, in one-letter code: uncharacterized protein (150 aa).

In terms of domain architecture, HTH asnC-type spans 5–66 (LDKVDRRLLE…KPNYKKLNLG (62 aa)). Positions 24 to 43 (IATLSKKLGIPRTTVHYRIK) form a DNA-binding region, H-T-H motif.

This is an uncharacterized protein from Pyrococcus abyssi (strain GE5 / Orsay).